The following is a 530-amino-acid chain: Per os infectivity factor 1 (530 aa).

Positions 1-15 (MHFAIILLFLLVIIA) are cleaved as a signal peptide.

Forms the PIF complex together with PIF2 and PIF3. The complex also interacts with per os infectivity factor PIF0.

The protein resides in the virion membrane. Per os infectivity factor that mediates the specific binding of occluded virions (ODV) to the host midgut target cells. The protein is Per os infectivity factor 1 of Autographa californica nuclear polyhedrosis virus (AcMNPV).